We begin with the raw amino-acid sequence, 198 residues long: Type II secretion system protein J (198 aa).

Residues 1-7 (MIRRSSG) constitute a propeptide, leader sequence. At phenylalanine 8 the chain carries N-methylphenylalanine. A helical transmembrane segment spans residues 8–28 (FTLVEMLLALAILAALSVAAV).

It belongs to the GSP J family. Type II secretion is composed of four main components: the outer membrane complex, the inner membrane complex, the cytoplasmic secretion ATPase and the periplasm-spanning pseudopilus. Interacts with core component PulG. In terms of processing, cleaved by prepilin peptidase. Post-translationally, methylated by prepilin peptidase at the amino group of the N-terminal phenylalanine once the leader sequence is cleaved by prepilin peptidase.

Its subcellular location is the cell inner membrane. Component of the type II secretion system required for the energy-dependent secretion of extracellular factors such as proteases and toxins from the periplasm. Part of the pseudopilus tip complex that is critical for the recognition and binding of secretion substrates. The sequence is that of Type II secretion system protein J (pulJ) from Klebsiella pneumoniae.